The primary structure comprises 235 residues: MKKINIIKIVFIITVILISTISPIIKSDSKKDISNVKSDLLYAYTITPYDYKDCRVNFSTTHTLNIDTQKYRGKDYYISSEMSYEASQKFKRDDHVDVFGLFYILNSHTGEYIYGGITPAQNNKVNHKLLGNLFISGESQQNLNNKIILEKDIVTFQEIDFKIRKYLMDNYKIYDATSPYVSGRIEIGTKDGKHEQIDLFDSPNEGTRSDIFAKYKDNRIINMKNFSHFDIYLEK.

An N-terminal signal peptide occupies residues 1–27 (MKKINIIKIVFIITVILISTISPIIKS). H194, H228, and D230 together coordinate Zn(2+).

Belongs to the staphylococcal/streptococcal toxin family.

Superantigen that acts as a causative agent of the symptoms associated with scarlet fever. Has been associated with streptococcal toxic shock-like disease and may play a role in the early events of rheumatic fever. Superantigens cross-link major histocompatibility complex (MHC) class II and T-cell receptor (TCR) molecules, resulting in an overstimulation of T-cells associated with a massive release of pyrogenic and inflammatory cytokines. This chain is Exotoxin type C, found in Streptococcus pyogenes serotype M18 (strain MGAS8232).